Consider the following 431-residue polypeptide: Cytochrome c oxidase subunit 3 (431 aa).

Helical transmembrane passes span 70–90 (IAPLAVTLPLAFFVLNYFGVI), 96–116 (FVIALSSFIGGLTIWAISIVF), 132–152 (LVMGMMMFIISEIMFFFSFFW), 176–196 (VYSYMGLPLLNTVLLLLSGAI), 321–341 (LYFTLVCAVVFLFCQGYEYYF), 356–376 (FLLTGFHGFHVLVGSILIGII), and 408–428 (LFYWHFVDIVWIFLYIVIYWW).

This sequence belongs to the cytochrome c oxidase subunit 3 family. Component of the cytochrome c oxidase (complex IV, CIV), a multisubunit enzyme composed of a catalytic core of 3 subunits and several supernumerary subunits. The complex exists as a monomer or a dimer and forms supercomplexes (SCs) in the inner mitochondrial membrane with ubiquinol-cytochrome c oxidoreductase (cytochrome b-c1 complex, complex III, CIII).

It localises to the mitochondrion inner membrane. The catalysed reaction is 4 Fe(II)-[cytochrome c] + O2 + 8 H(+)(in) = 4 Fe(III)-[cytochrome c] + 2 H2O + 4 H(+)(out). In terms of biological role, component of the cytochrome c oxidase, the last enzyme in the mitochondrial electron transport chain which drives oxidative phosphorylation. The respiratory chain contains 3 multisubunit complexes succinate dehydrogenase (complex II, CII), ubiquinol-cytochrome c oxidoreductase (cytochrome b-c1 complex, complex III, CIII) and cytochrome c oxidase (complex IV, CIV), that cooperate to transfer electrons derived from NADH and succinate to molecular oxygen, creating an electrochemical gradient over the inner membrane that drives transmembrane transport and the ATP synthase. Cytochrome c oxidase is the component of the respiratory chain that catalyzes the reduction of oxygen to water. Electrons originating from reduced cytochrome c in the intermembrane space (IMS) are transferred via the dinuclear copper A center (CU(A)) of subunit 2 and heme A of subunit 1 to the active site in subunit 1, a binuclear center (BNC) formed by heme A3 and copper B (CU(B)). The BNC reduces molecular oxygen to 2 water molecules using 4 electrons from cytochrome c in the IMS and 4 protons from the mitochondrial matrix. This chain is Cytochrome c oxidase subunit 3 (cox3), found in Dictyostelium citrinum (Slime mold).